Consider the following 615-residue polypeptide: Melanopsin-B (615 aa).

At M1–Y19 the chain is on the extracellular side. A helical membrane pass occupies residues V20 to M40. Topologically, residues Y41–F56 are cytoplasmic. The helical transmembrane segment at I57–I77 threads the bilayer. Residues N78–M93 are Extracellular-facing. Cysteines 91 and 169 form a disulfide. The helical transmembrane segment at Y94–L114 threads the bilayer. The Cytoplasmic portion of the chain corresponds to D115–M136. A helical transmembrane segment spans residues V137–W157. At S158–C189 the chain is on the extracellular side. Residues F190 to I210 traverse the membrane as a helical segment. Over R211–V244 the chain is Cytoplasmic. The chain crosses the membrane as a helical span at residues A245–I265. The Extracellular portion of the chain corresponds to A266–K279. A helical transmembrane segment spans residues A280 to I300. Residue K287 is modified to N6-(retinylidene)lysine. Residues H301–L615 lie on the Cytoplasmic side of the membrane. Disordered regions lie at residues L390 to D420 and N465 to P502. The segment covering A401 to Q415 has biased composition (polar residues). Over residues N469–R478 the composition is skewed to basic residues.

This sequence belongs to the G-protein coupled receptor 1 family. Opsin subfamily. In terms of tissue distribution, expressed in the inner nuclear layer of the retina, possibly in amacrine and ganglion cells. Expressed in a subpopulation of neurons in the dorsal habenula.

Its subcellular location is the cell membrane. In terms of biological role, photoreceptor implicated in non-image-forming responses to light. The polypeptide is Melanopsin-B (opn4b) (Gadus morhua (Atlantic cod)).